A 97-amino-acid polypeptide reads, in one-letter code: Ataxin-7-like protein 3B (97 aa).

The interval 76 to 97 is disordered; that stretch reads SLPGDPGDGPQTELQRSPPEFQ. Ser-92 carries the post-translational modification Phosphoserine.

It belongs to the SGF11 family. Interacts strongly with ENY2. Interacts weakly with USP22.

The protein resides in the cytoplasm. Its function is as follows. By binding to ENY2, interferes with the nuclear functions of the deubiquitinase (DUB) module of the SAGA complex which consists of ENY2, ATXN7, ATXN7L3 and the histone deubiquitinating component USP22. Affects USP22 DUB activity toward histones indirectly by changing the subcellular distribution of ENY2 and altering ENY2 availability for ATXN7L3 interaction. Regulates H2B monoubiquitination (H2Bub1) levels through cytoplasmic sequestration of ENY2 resulting in loss of nuclear ENY2-ATXN7L3 association which destabilizes ATXN7L3. Affects protein expression levels of ENY2 and ATXN7L3. This Mus musculus (Mouse) protein is Ataxin-7-like protein 3B (Atxn7l3b).